The primary structure comprises 560 residues: Thermosome subunit alpha (560 aa).

The span at 535-547 shows a compositional bias: basic and acidic residues; sequence SEKKGGEGSKEES. The tract at residues 535–560 is disordered; that stretch reads SEKKGGEGSKEESGGEGGAGTPSLGD.

The protein belongs to the TCP-1 chaperonin family. As to quaternary structure, forms a heterooligomeric complex of two stacked nine-membered rings; one of alpha and the other of beta subunits. Sometimes called a 'rosettasome'.

The protein localises to the cytoplasm. It catalyses the reaction ATP + H2O = ADP + phosphate + H(+). Its function is as follows. Molecular chaperone; binds unfolded polypeptides in vitro, stimulates protein folding and has ATPase activity. One of the most abundant proteins in the cell at all temperatures. In Saccharolobus shibatae (strain ATCC 51178 / DSM 5389 / JCM 8931 / NBRC 15437 / B12) (Sulfolobus shibatae), this protein is Thermosome subunit alpha (thsA).